A 314-amino-acid polypeptide reads, in one-letter code: Methionyl-tRNA formyltransferase (314 aa).

Ser113–Pro116 lines the (6S)-5,6,7,8-tetrahydrofolate pocket.

The protein belongs to the Fmt family.

The enzyme catalyses L-methionyl-tRNA(fMet) + (6R)-10-formyltetrahydrofolate = N-formyl-L-methionyl-tRNA(fMet) + (6S)-5,6,7,8-tetrahydrofolate + H(+). In terms of biological role, attaches a formyl group to the free amino group of methionyl-tRNA(fMet). The formyl group appears to play a dual role in the initiator identity of N-formylmethionyl-tRNA by promoting its recognition by IF2 and preventing the misappropriation of this tRNA by the elongation apparatus. The sequence is that of Methionyl-tRNA formyltransferase from Pseudomonas aeruginosa (strain LESB58).